We begin with the raw amino-acid sequence, 285 residues long: 2-dehydro-3-deoxyphosphooctonate aldolase (285 aa).

It belongs to the KdsA family.

It is found in the cytoplasm. The catalysed reaction is D-arabinose 5-phosphate + phosphoenolpyruvate + H2O = 3-deoxy-alpha-D-manno-2-octulosonate-8-phosphate + phosphate. It participates in carbohydrate biosynthesis; 3-deoxy-D-manno-octulosonate biosynthesis; 3-deoxy-D-manno-octulosonate from D-ribulose 5-phosphate: step 2/3. The protein operates within bacterial outer membrane biogenesis; lipopolysaccharide biosynthesis. The sequence is that of 2-dehydro-3-deoxyphosphooctonate aldolase from Methylibium petroleiphilum (strain ATCC BAA-1232 / LMG 22953 / PM1).